The following is a 397-amino-acid chain: Mannan endo-1,4-beta-mannosidase 1 (397 aa).

The first 23 residues, methionine 1 to alanine 23, serve as a signal peptide directing secretion. Tryptophan 83 and asparagine 198 together coordinate substrate. The active-site Proton donor is glutamate 199. Substrate is bound at residue tyrosine 276. Glutamate 316 functions as the Nucleophile in the catalytic mechanism. Tryptophan 354 is a binding site for substrate.

The protein belongs to the glycosyl hydrolase 5 (cellulase A) family.

Its subcellular location is the secreted. The catalysed reaction is Random hydrolysis of (1-&gt;4)-beta-D-mannosidic linkages in mannans, galactomannans and glucomannans.. The sequence is that of Mannan endo-1,4-beta-mannosidase 1 (MAN1) from Solanum lycopersicum (Tomato).